We begin with the raw amino-acid sequence, 239 residues long: 1-(5-phosphoribosyl)-5-[(5-phosphoribosylamino)methylideneamino] imidazole-4-carboxamide isomerase (239 aa).

The active-site Proton acceptor is aspartate 9. Catalysis depends on aspartate 131, which acts as the Proton donor.

It belongs to the HisA/HisF family.

The protein localises to the cytoplasm. It carries out the reaction 1-(5-phospho-beta-D-ribosyl)-5-[(5-phospho-beta-D-ribosylamino)methylideneamino]imidazole-4-carboxamide = 5-[(5-phospho-1-deoxy-D-ribulos-1-ylimino)methylamino]-1-(5-phospho-beta-D-ribosyl)imidazole-4-carboxamide. Its pathway is amino-acid biosynthesis; L-histidine biosynthesis; L-histidine from 5-phospho-alpha-D-ribose 1-diphosphate: step 4/9. The sequence is that of 1-(5-phosphoribosyl)-5-[(5-phosphoribosylamino)methylideneamino] imidazole-4-carboxamide isomerase from Bacteroides fragilis (strain YCH46).